Here is a 263-residue protein sequence, read N- to C-terminus: Small ribosomal subunit protein uS2 (263 aa).

Ser2 carries the N-acetylserine modification. A compositionally biased stretch (low complexity) spans 213–223 (NAAEEARAGAT). The tract at residues 213 to 245 (NAAEEARAGATEETEEVVAEAETEWNTETNVED) is disordered. Positions 224-245 (EETEEVVAEAETEWNTETNVED) are enriched in acidic residues.

Belongs to the universal ribosomal protein uS2 family. Component of the small ribosomal subunit. Mature ribosomes consist of a small (40S) and a large (60S) subunit. The 40S subunit contains about 33 different proteins and 1 molecule of RNA (18S). The 60S subunit contains about 49 different proteins and 3 molecules of RNA (25S, 5.8S and 5S). Interacts with RPS21.

It is found in the cytoplasm. Functionally, required for the assembly and/or stability of the 40S ribosomal subunit. Required for the processing of the 20S rRNA-precursor to mature 18S rRNA in a late step of the maturation of 40S ribosomal subunits. The chain is Small ribosomal subunit protein uS2 from Clavispora lusitaniae (strain ATCC 42720) (Yeast).